The following is a 337-amino-acid chain: GTP 3',8-cyclase (337 aa).

The Radical SAM core domain occupies 17 to 242 (TFQREYYYLR…RQKDRTDGPA (226 aa)). Residue R26 participates in GTP binding. C33 and C37 together coordinate [4Fe-4S] cluster. Residue Y39 coordinates S-adenosyl-L-methionine. [4Fe-4S] cluster is bound at residue C40. R76 is a binding site for GTP. G80 serves as a coordination point for S-adenosyl-L-methionine. Position 107 (T107) interacts with GTP. Residue S131 participates in S-adenosyl-L-methionine binding. K168 provides a ligand contact to GTP. M202 is a binding site for S-adenosyl-L-methionine. [4Fe-4S] cluster-binding residues include C265 and C268. Residue 270-272 (RLR) coordinates GTP. C282 provides a ligand contact to [4Fe-4S] cluster.

The protein belongs to the radical SAM superfamily. MoaA family. In terms of assembly, monomer and homodimer. [4Fe-4S] cluster is required as a cofactor.

It catalyses the reaction GTP + AH2 + S-adenosyl-L-methionine = (8S)-3',8-cyclo-7,8-dihydroguanosine 5'-triphosphate + 5'-deoxyadenosine + L-methionine + A + H(+). It functions in the pathway cofactor biosynthesis; molybdopterin biosynthesis. Its function is as follows. Catalyzes the cyclization of GTP to (8S)-3',8-cyclo-7,8-dihydroguanosine 5'-triphosphate. The sequence is that of GTP 3',8-cyclase from Mannheimia succiniciproducens (strain KCTC 0769BP / MBEL55E).